Consider the following 861-residue polypeptide: Integrator complex subunit 6-like (861 aa).

The VWFA domain occupies 3–227 (ILLFLIDTSA…QCLESLVQKV (225 aa)). The tract at residues 605–626 (PQNKVKRPGEPNSPMSSKRRRS) is disordered. S617 is subject to Phosphoserine.

The chain is Integrator complex subunit 6-like (INTS6L) from Homo sapiens (Human).